We begin with the raw amino-acid sequence, 539 residues long: MGTEGPPPPAASRGRQGCLLVPARTKTTIALLYDEESENAYDIRLKLTKEVLTIQKQDVVCVGGSHQGRNRRTVTLRRQPVGGLGLSIKGGSEHNVPVVISKIFEDQAADQTGMLFVGDAVLQVNGIHVENATHEEVVHLLRNAGDEVTITVEYLREAPAFLKLPLGSPGPSSDHSSGASSPLFDSGLHLNGNSSTTAPSSPSSPIAKDPRYEKRWLDTLSVPLSMARISRYKAGTEKLRWNAFEVLALDGVSSGILRFYTAQDGTDWLRAVSANIRELTLQNMKMANKCCSPSDQVVHMGWVNEKLQGADSSQTFRPKFLALKGPSFYVFSTPPVSTFDWVRAERTYHLCEVLFKVHKFWLTEDCWLQANLYLGLQDFDFEDQRPYCFSIVAGHGKSHVFNVELGSELAMWEKSFQRATFMEVQRTGSRTYMCSWQGEMLCFTVDFALGFTCFESKTKNVLWRFKFSQLKGSSDDGKTRVKLLFQNLDTKQIETKELEFQDLRAVLHCIHSFIAAKVASVDPGFMDSQSLARKYMYSS.

The PDZ domain occupies 73 to 156; the sequence is TVTLRRQPVG…EVTITVEYLR (84 aa). Composition is skewed to low complexity over residues 168-183 and 194-205; these read SPGP…SSPL and SSTTAPSSPSSP. Positions 168-209 are disordered; it reads SPGPSSDHSSGASSPLFDSGLHLNGNSSTTAPSSPSSPIAKD. One can recognise a PH domain in the interval 296–421; sequence QVVHMGWVNE…WEKSFQRATF (126 aa).

Belongs to the syntrophin family. Interacts with the dystrophin protein DMD and related proteins DTNA and DTNB. As to expression, widely expressed. Strong expression in brain and testis. In CNS, it is expressed in the perikaryon and proximal portion of the neuronal processes. Strong expression in the hippocampus, neuron-rich dendate granule cells, and pyramidal cell layers. Highly expressed in neurons of the cerebral cortex. Also expressed in the cerebellar cortex, deep cerebellar nuclei, thalamus, and basal ganglia.

It is found in the cell membrane. Its subcellular location is the sarcolemma. The protein localises to the cytoplasm. It localises to the cytoskeleton. Adapter protein that binds to and probably organizes the subcellular localization of a variety of proteins. May link various receptors to the actin cytoskeleton and the dystrophin glycoprotein complex. The sequence is that of Gamma-2-syntrophin (SNTG2) from Homo sapiens (Human).